We begin with the raw amino-acid sequence, 259 residues long: Ubiquitin-conjugating enzyme E2 J2 (259 aa).

Residues 1–226 (MSNNSNKRAP…AGLPQANRHH (226 aa)) lie on the Cytoplasmic side of the membrane. The UBC core domain maps to 12-162 (TATQRLKQDY…DKVFCELFPE (151 aa)). The Glycyl thioester intermediate role is filled by Cys94. The helical; Anchor for type IV membrane protein transmembrane segment at 227 to 247 (GLLGGALANLFVIVGFAAFAY) threads the bilayer. The Lumenal segment spans residues 248–259 (TVKYVLRSIAQE).

It belongs to the ubiquitin-conjugating enzyme family. In terms of assembly, interacts with murid herpesvirus 4 protein K3 (mK3).

The protein localises to the endoplasmic reticulum membrane. The enzyme catalyses S-ubiquitinyl-[E1 ubiquitin-activating enzyme]-L-cysteine + [E2 ubiquitin-conjugating enzyme]-L-cysteine = [E1 ubiquitin-activating enzyme]-L-cysteine + S-ubiquitinyl-[E2 ubiquitin-conjugating enzyme]-L-cysteine.. Its pathway is protein modification; protein ubiquitination. In terms of biological role, catalyzes the covalent attachment of ubiquitin to other proteins. Seems to function in the selective degradation of misfolded membrane proteins from the endoplasmic reticulum (ERAD). In cooperation with the GATOR2 complex, catalyzes 'Lys-6'-linked ubiquitination of NPRL2. In case of infection by the murid herpesvirus 4, its association with the viral E3 ligase K3 mediates ubiquitination of host surface class I (MHC-I) H-2D(b)/H2-D1 and H-2K(b)/H2-K1 molecules before they exit the endoplasmic reticulum, leading to their degradation by the ERAD system, thus blocking the immune detection of virus-infected cells. The complex formed with the murid herpesvirus 4 protein K3 mediates ubiquitination of lysine, as well as serine and threonine residues present in the cytoplasmic tail of surface class I molecules and promotes ubiquitination of hydroxylated serine or threonine residues via ester bonds instead of the classical isopeptide linkage. This is Ubiquitin-conjugating enzyme E2 J2 (Ube2j2) from Mus musculus (Mouse).